Reading from the N-terminus, the 128-residue chain is Anti-sigma-F factor antagonist RsfA (128 aa).

The STAS domain maps to 17–128 (LKATIQHHDS…PTTESALSAT (112 aa)). Residues C73 and C109 are joined by a disulfide bond.

This sequence belongs to the anti-sigma-factor antagonist family. Monomer. Interacts with anti-sigma-F factor RsbW (UsfX).

Functionally, positive, redox-sensitive regulator of sigma-F (SigF) activity. When reduced binds to anti-sigma-F factor RsbW (UsfX) preventing its binding to SigF, thus activating transcription. The sequence is that of Anti-sigma-F factor antagonist RsfA (rsfA) from Mycobacterium tuberculosis (strain CDC 1551 / Oshkosh).